A 907-amino-acid polypeptide reads, in one-letter code: Interference hedgehog (907 aa).

The first 23 residues, 1 to 23, serve as a signal peptide directing secretion; that stretch reads MSLTRRFSLTLLLLLPLLTSLLA. Over 24–709 the chain is Extracellular; the sequence is AIPVLQANLS…SHNETFNMNP (686 aa). Ig-like C2-type domains are found at residues 42 to 149, 152 to 233, 252 to 340, and 346 to 433; these read PGVR…ASIS, GADT…VRLA, PALL…FIEL, and PRIL…LQVN. 3 disulfides stabilise this stretch: Cys-65–Cys-127, Cys-173–Cys-221, and Cys-276–Cys-324. N-linked (GlcNAc...) asparagine glycans are attached at residues Asn-101, Asn-203, Asn-300, and Asn-355. Cys-367 and Cys-415 are disulfide-bonded. The interval 427 to 474 is disordered; it reads GTLLQVNPKQLPDGEGTGMDSGRSSARPTHSRKQKQQTQMVPPSAPNV. Over residues 462–474 the composition is skewed to polar residues; sequence QQTQMVPPSAPNV. 2 Fibronectin type-III domains span residues 468–578 and 586–681; these read PPSA…LQRG and VPEL…TQRP. Asn-473 carries an N-linked (GlcNAc...) asparagine glycan. Positions 504, 511, and 513 each coordinate heparin. N-linked (GlcNAc...) asparagine glycosylation is found at Asn-537 and Asn-548. Arg-552 contributes to the heparin binding site. N-linked (GlcNAc...) asparagine glycosylation is present at Asn-568. Residues 676 to 688 are compositionally biased toward polar residues; sequence GRTQRPRASSTPQ. The interval 676 to 701 is disordered; that stretch reads GRTQRPRASSTPQPVLHAVDTTTPSH. Asn-702 is a glycosylation site (N-linked (GlcNAc...) asparagine). Residues 710–730 traverse the membrane as a helical segment; the sequence is MLTGTIGGGALLVLLVISACL. Over 731–907 the chain is Cytoplasmic; sequence CLCRRRSSRG…SSGSLNSVGV (177 aa). Disordered stretches follow at residues 780-805 and 829-881; these read AQQQ…QDND and MSSS…NKPG. Low complexity-rich tracts occupy residues 781–794 and 853–863; these read QQQQ…LQQQ and NNNNLNQPGDG. A compositionally biased stretch (polar residues) spans 865-878; it reads LANSADSPRLQASN.

The protein belongs to the immunoglobulin superfamily. IHOG family. In terms of assembly, homodimer. Heterotetramer; 2 iHog chains bind 2 hh chains when facilitated by heparin, heparin is required to promote high-affinity interactions between hh and iHog.

The protein localises to the membrane. Functionally, mediates response to the active Hedgehog (Hh) protein signal in embryos, functioning upstream or at the level of patched (ptc). The chain is Interference hedgehog from Drosophila virilis (Fruit fly).